A 203-amino-acid chain; its full sequence is Glycerol-3-phosphate acyltransferase (203 aa).

5 helical membrane-spanning segments follow: residues 13-33, 62-82, 88-108, 118-138, and 159-179; these read TLAC…LILT, LAAA…AIAS, AGIA…WLSF, IGVL…IWLA, and IALY…MTAI.

This sequence belongs to the PlsY family. In terms of assembly, probably interacts with PlsX.

The protein localises to the cell inner membrane. It catalyses the reaction an acyl phosphate + sn-glycerol 3-phosphate = a 1-acyl-sn-glycero-3-phosphate + phosphate. It functions in the pathway lipid metabolism; phospholipid metabolism. In terms of biological role, catalyzes the transfer of an acyl group from acyl-phosphate (acyl-PO(4)) to glycerol-3-phosphate (G3P) to form lysophosphatidic acid (LPA). This enzyme utilizes acyl-phosphate as fatty acyl donor, but not acyl-CoA or acyl-ACP. This Rhizobium meliloti (strain 1021) (Ensifer meliloti) protein is Glycerol-3-phosphate acyltransferase.